We begin with the raw amino-acid sequence, 75 residues long: Protein Tlp homolog (75 aa).

Residues 53-75 (REALDGMREEIKDEARDKKNGYM) form a disordered region.

Belongs to the Tlp family.

The protein is Protein Tlp homolog of Clostridium botulinum (strain ATCC 19397 / Type A).